The primary structure comprises 322 residues: Pyrroline-5-carboxylate reductase (322 aa).

Transmembrane regions (helical) follow at residues 9-29 (YPNV…VGLL) and 117-137 (ILIS…LHFW). The disordered stretch occupies residues 302 to 322 (LSQSAGSHGEDNTTDSKTSRA). Residue Asn313 is glycosylated (N-linked (GlcNAc...) asparagine).

The protein belongs to the pyrroline-5-carboxylate reductase family.

The protein resides in the membrane. The enzyme catalyses L-proline + NADP(+) = (S)-1-pyrroline-5-carboxylate + NADPH + 2 H(+). It carries out the reaction L-proline + NAD(+) = (S)-1-pyrroline-5-carboxylate + NADH + 2 H(+). Its pathway is alkaloid biosynthesis. Its function is as follows. Pyrroline-5-carboxylate reductase; part of the gene cluster that mediates the biosynthesis of paraherquamide, a fungal indole alkaloid that belongs to a family of natural products containing a characteristic bicyclo[2.2.2]diazaoctane core. The first steps in the biosynthesis of paraherquamide is the production of the beta-methyl-proline precursor from L-isoleucine. They require oxidation of a terminally hydroxylated L-isoleucine to the corresponding aldehyde by enzymes which have still to be identified. Spontaneous cyclization and dehydration would yield the 4-methyl pyrolline-5-carboxylic acid, which is then reduced by the pyrroline-5-carboxylate reductase phqD leading to the beta-methyl-proline precursor. The next step of paraherquamide biosynthesis involves coupling of beta-methyl-proline and L-tryptophan by the bimodular NRPS phqB, to produce a monooxopiperazine intermediate. The reductase (R) domain of phqB utilizes NADPH for hydride transfer to reduce the thioester bond of the T domain-tethered linear dipeptide to a hemithioaminal intermediate, which spontaneously cleaves the C-S bond to release the aldehyde product. This compound undergoes spontaneous cyclization and dehydration to give a dienamine which is reverse prenylated at C-2 by the reverse prenyltransferase phqJ. The other prenyltransferase present in the cluster, phqI may be a redundant gene in the pathway. During biosynthetic assembly, the key step to produce the polycyclic core is catalyzed by the bifunctional reductase and intramolecular [4+2] Diels-Alderase, phqE, resulting in formation of the [2.2.2] diazaoctane intermediate preparaherquamide. Following formation of preparaherquamide, an indole 2,3-epoxidation-initiated pinacol-like rearrangement is catalyzed by the phqK FAD-dependent monooxygenase. The prenyltransferase phqA, the cytochrome P450 monooxygenase phqL, and the FAD-linked oxidoreductase phqH (or the cytochrome P450 monooxygenase phqM), are proposed to be involved in the formation of the pyran ring. The FAD-dependent monooxygenase phqK is likely responsible for generation of the spiro-oxindole, and the N-methylation is likely mediated by the phqN methyltransferase leading to the isolable natural product paraherquamide F. However, the order of these biosynthetic steps has still to be determined. In late-stage paraherquamide biosynthesis, the third P450 monooxygenase, phqO, is probably responsible for the C-14 hydroxylation, transforming paraherquamide F to paraherquamide G, and paraherquamide E to the final product paraherquamide A. The expansion from the 6-membered ring pyran (in paraherquamides F and G) to the 7-membered dioxepin ring (in paraherquamides A and E) represents a poorly understood but intriguing process that probably involves the 2-oxoglutarate-dependent dioxygenase phqC. Finally, the remaining members of the paraherquamide cluster, including phqI as well as phqM (or phqH), do not have a clearly prescribed role and appear to be redundant. The protein is Pyrroline-5-carboxylate reductase of Penicillium fellutanum.